Consider the following 180-residue polypeptide: Lipid droplet coating protein Cap20 (180 aa).

This sequence belongs to the perilipin family. Interacts with class I hydrophobin Hydr1. Interacts also with the cAMP-dependent protein kinase catalytic subunit PkaC1.

It localises to the lipid droplet. Lipid droplet coating protein that regulates lipid metabolism, appressorial turgor pressure, and virulence. Mature appressoria with high turgor pressure are essential to penetrate the leaf surface. The polypeptide is Lipid droplet coating protein Cap20 (Colletotrichum siamense (Anthracnose fungus)).